Consider the following 122-residue polypeptide: Large ribosomal subunit protein uL14 (122 aa).

It belongs to the universal ribosomal protein uL14 family. In terms of assembly, part of the 50S ribosomal subunit. Forms a cluster with proteins L3 and L19. In the 70S ribosome, L14 and L19 interact and together make contacts with the 16S rRNA in bridges B5 and B8.

Its function is as follows. Binds to 23S rRNA. Forms part of two intersubunit bridges in the 70S ribosome. The polypeptide is Large ribosomal subunit protein uL14 (Streptomyces coelicolor (strain ATCC BAA-471 / A3(2) / M145)).